We begin with the raw amino-acid sequence, 102 residues long: P antigen family member 4 (102 aa).

Basic residues predominate over residues 1–10; that stretch reads MSARVRSRSR. Residues 1-102 are disordered; sequence MSARVRSRSR…KTKEAGDGQP (102 aa). The residue at position 7 (Ser7) is a Phosphoserine; by CLK2. Ser9 bears the Phosphoserine; by HIPK1 and CLK2 mark. The span at 45–85 shows a compositional bias: basic and acidic residues; that stretch reads GQEREGTPPIEERKVEGDCQEMDLEKTRSERGDGSDVKEKT. Thr51 is modified (phosphothreonine; by HIPK1 and CLK2). Residue Thr71 is modified to Phosphothreonine; by CLK2. Phosphoserine; by CLK2 is present on residues Ser73 and Ser79. Residues Thr85 and Thr94 each carry the phosphothreonine; by CLK2 modification.

This sequence belongs to the GAGE family. Interacts with JUN. HIPK1-mediated phosphorylation at Thr-51 leads to the compaction of its intrinsically disordered conformation and is critical for its ability to potentiate the transcriptional activator activity of JUN inspite of a reduced interaction with JUN. CLK2-mediated phosphorylation at multiple Ser and Thr residues attenuates its ability to potentiate JUN transcriptional activator activity. Expressed at basal lvels in the adult normal prostate gland but is highly up-regulated in the fetal prostate and prostate cancer cells. Preferentially expressed in normal male and female reproductive tissues, testis, fallopian tube, uterus, and placenta, as well as in testicular cancer, uterine cancer, cervical cancer and kidney cancer.

The protein resides in the cytoplasm. Its subcellular location is the nucleus. It is found in the mitochondrion. Functionally, intrinsically disordered protein that potentiates the transcriptional activator activity of JUN. Protects cells from stress-induced apoptosis by inhibiting reactive oxygen species (ROS) production and via regulation of the MAPK signaling pathway. This chain is P antigen family member 4 (PAGE4), found in Homo sapiens (Human).